The sequence spans 296 residues: Phosphoribosylaminoimidazole-succinocarboxamide synthase (296 aa).

This sequence belongs to the SAICAR synthetase family.

The enzyme catalyses 5-amino-1-(5-phospho-D-ribosyl)imidazole-4-carboxylate + L-aspartate + ATP = (2S)-2-[5-amino-1-(5-phospho-beta-D-ribosyl)imidazole-4-carboxamido]succinate + ADP + phosphate + 2 H(+). Its pathway is purine metabolism; IMP biosynthesis via de novo pathway; 5-amino-1-(5-phospho-D-ribosyl)imidazole-4-carboxamide from 5-amino-1-(5-phospho-D-ribosyl)imidazole-4-carboxylate: step 1/2. The sequence is that of Phosphoribosylaminoimidazole-succinocarboxamide synthase from Geobacter sp. (strain M21).